The following is a 208-amino-acid chain: Thymidylate kinase (208 aa).

10–17 provides a ligand contact to ATP; it reads GLEGAGKS.

This sequence belongs to the thymidylate kinase family.

The catalysed reaction is dTMP + ATP = dTDP + ADP. Functionally, phosphorylation of dTMP to form dTDP in both de novo and salvage pathways of dTTP synthesis. The polypeptide is Thymidylate kinase (Glaesserella parasuis serovar 5 (strain SH0165) (Haemophilus parasuis)).